The chain runs to 456 residues: MKIEEVKSTVKTQRIAAHSHVKGLGLDENGVPLQMAAGLVGQKDAREAAGIVVDLIKSKKMSGRALLLAGPPGTGKTAIALAIAQELGNKVPFCPMVGSEVFSSEIKKTEVLMENFRRSIGLRIRETKEVYEGEVTELTPVETENPMGGYGKTISNVVIGLKTAKGTKQLKLDPSIYESLQKEKVEVGDVIYIEANSGAVKRQGRSDTFATEFDLETEEYVPLPKGDVHKKKEVVQDVTLHDLDVANARPQGGQDVLSMVGQIMKPKKTEITDKLRMEINKVVNKYIDQGIAELVPGVLFIDEVHMLDLECFTYLHKSLESAIAPIVIFATNRGRCVIRGTDDIISPHGIPLDLLDRLLIVRTAPYNLSEIEQIIKLRAQTEGLSVEDSAIQALSEIGDNTTLRYAVQLLTPAHQNCKVNGRTQITKDDIVEVNGLFLDAKRSAKFLQEENTKYMM.

Position 70–77 (70–77 (GPPGTGKT)) interacts with ATP.

Belongs to the RuvB family. As to quaternary structure, forms homohexameric rings. May form a dodecamer with rept made of two stacked hexameric rings. Component of the chromatin remodeling Ino80 complex.

It localises to the nucleus. It carries out the reaction ATP + H2O = ADP + phosphate + H(+). Acts as a transcriptional coactivator in Wg signaling. In terms of biological role, proposed core component of the chromatin remodeling Ino80 complex which is involved in transcriptional regulation, DNA replication and probably DNA repair. The sequence is that of RuvB-like helicase 1 from Aedes aegypti (Yellowfever mosquito).